Reading from the N-terminus, the 495-residue chain is MSSSMCLARCSASLSAGNFPSRMFMGRLHAQRRTRTLQLRCAASLLPDQPTLAASSAISPVPSDLPEVLGDALHRLGAIYVLADASASTAAAAVMPTAVDSAAGAAPQRAGGWVAPVADALEQVLYALQEGLDKLHVPYSYGYSIILLTLIVKLLTYPLTKQQVESAMAVQALKPRIDLIKDRFGEDKDKIQKETSVLYEQAGVNPLAGCLPTLATIPIFIGLFSSLTNVANDGLLDTQGFYFVPSLAGPTTMAMRQSGLGTSWLWPLGPDGAPPIGWEDAAAYLTLPLLLVAVQYASSSVTSPPIDPKDENANTQRALLVFLPLMVGWFSLNVPAGLSLYYLANTVLSSAIQIYLKKLGGANVVMNELGPVTKPGSGRRNGVAAGEWSVWKPATVLTTAEAAKARAEAEEAVERAREAAEEAAAAAAFDNASVSLSVDDSTAAIAGTATMAVTAGAPAAAMDPSKVNRRCKRRRLTSLVQDGSTASAAVAGASA.

A helical transmembrane segment spans residues 76 to 96 (LGAIYVLADASASTAAAAVMP). Over 97 to 206 (TAVDSAAGAA…VLYEQAGVNP (110 aa)) the chain is Stromal. A helical transmembrane segment spans residues 207-227 (LAGCLPTLATIPIFIGLFSSL). Residues 228 to 273 (TNVANDGLLDTQGFYFVPSLAGPTTMAMRQSGLGTSWLWPLGPDGA) lie on the Lumenal side of the membrane. A helical membrane pass occupies residues 274–294 (PPIGWEDAAAYLTLPLLLVAV). Residues 295–317 (QYASSSVTSPPIDPKDENANTQR) lie on the Stromal side of the membrane. A helical membrane pass occupies residues 318–338 (ALLVFLPLMVGWFSLNVPAGL). Residues 339-441 (SLYYLANTVL…ASVSLSVDDS (103 aa)) are Lumenal-facing. Residues 442 to 462 (TAAIAGTATMAVTAGAPAAAM) form a helical membrane-spanning segment. The Stromal portion of the chain corresponds to 463-495 (DPSKVNRRCKRRRLTSLVQDGSTASAAVAGASA).

It belongs to the OXA1/ALB3/YidC (TC 2.A.9.2) family. Associates with the LHCII complex and with the psaE subunit of the LHCI complex.

The protein resides in the plastid. It is found in the chloroplast thylakoid membrane. Its function is as follows. Required for the insertion of some light-harvesting complexes (LHC) proteins into the chloroplast thylakoid membrane. Essential for the assembly and activity of LHC I and II. Its function is probably partly distinct from that of ALB3.2. This chain is Inner membrane ALBINO3-like protein 1, chloroplastic (ALB3.1), found in Chlamydomonas reinhardtii (Chlamydomonas smithii).